Here is a 267-residue protein sequence, read N- to C-terminus: Ribosomal RNA small subunit methyltransferase A (267 aa).

Residues asparagine 18, leucine 20, glycine 45, glutamate 66, aspartate 91, and asparagine 112 each contribute to the S-adenosyl-L-methionine site.

Belongs to the class I-like SAM-binding methyltransferase superfamily. rRNA adenine N(6)-methyltransferase family. RsmA subfamily.

Its subcellular location is the cytoplasm. It carries out the reaction adenosine(1518)/adenosine(1519) in 16S rRNA + 4 S-adenosyl-L-methionine = N(6)-dimethyladenosine(1518)/N(6)-dimethyladenosine(1519) in 16S rRNA + 4 S-adenosyl-L-homocysteine + 4 H(+). In terms of biological role, specifically dimethylates two adjacent adenosines (A1518 and A1519) in the loop of a conserved hairpin near the 3'-end of 16S rRNA in the 30S particle. May play a critical role in biogenesis of 30S subunits. The protein is Ribosomal RNA small subunit methyltransferase A of Shewanella pealeana (strain ATCC 700345 / ANG-SQ1).